Here is a 550-residue protein sequence, read N- to C-terminus: Chaperonin GroEL (550 aa).

ATP-binding positions include 30–33 (TLGP), lysine 51, 87–91 (DGTTT), glycine 415, and aspartate 497.

The protein belongs to the chaperonin (HSP60) family. In terms of assembly, forms a cylinder of 14 subunits composed of two heptameric rings stacked back-to-back. Interacts with the co-chaperonin GroES.

It localises to the cytoplasm. It carries out the reaction ATP + H2O + a folded polypeptide = ADP + phosphate + an unfolded polypeptide.. Together with its co-chaperonin GroES, plays an essential role in assisting protein folding. The GroEL-GroES system forms a nano-cage that allows encapsulation of the non-native substrate proteins and provides a physical environment optimized to promote and accelerate protein folding. The chain is Chaperonin GroEL from Yersinia enterocolitica.